The chain runs to 206 residues: Large ribosomal subunit protein uL22m (206 aa).

Residues 1 to 40 constitute a mitochondrion transit peptide; the sequence is MAAALLRELGALWVPNLRIWTTQMLRVLPQSCIHTSTSLD.

This sequence belongs to the universal ribosomal protein uL22 family. As to quaternary structure, component of the mitochondrial ribosome large subunit (39S) which comprises a 16S rRNA and about 50 distinct proteins.

The protein localises to the mitochondrion. The polypeptide is Large ribosomal subunit protein uL22m (Mrpl22) (Rattus norvegicus (Rat)).